Here is a 687-residue protein sequence, read N- to C-terminus: Acetolactate synthase catalytic subunit, mitochondrial (687 aa).

Residues 1 to 90 (MIRQSTLKNF…AEPDMDTSFV (90 aa)) constitute a mitochondrion transit peptide. The segment covering 43 to 52 (YYSASPLPAS) has biased composition (low complexity). Residues 43-68 (YYSASPLPASKRPEPAPSFNVDPLEQ) form a disordered region. Glu139 contributes to the thiamine diphosphate binding site. Residues Arg241, 355–376 (HGCA…VGAR), and 407–426 (EVSP…VEGD) contribute to the FAD site. The thiamine pyrophosphate binding stretch occupies residues 499 to 579 (QHQMWAAQHW…VKILILNNEE (81 aa)). Mg(2+)-binding residues include Asp550, Asn577, and Glu579.

This sequence belongs to the TPP enzyme family. In terms of assembly, homodimer. The acetolactate synthase complex contains the catalytic subunit ILV2 and the regulatory small subunit ILV6. The cofactor is Mg(2+). Requires thiamine diphosphate as cofactor.

The protein localises to the mitochondrion. The catalysed reaction is 2 pyruvate + H(+) = (2S)-2-acetolactate + CO2. The enzyme catalyses 2-oxobutanoate + pyruvate + H(+) = (S)-2-ethyl-2-hydroxy-3-oxobutanoate + CO2. The protein operates within amino-acid biosynthesis; L-isoleucine biosynthesis; L-isoleucine from 2-oxobutanoate: step 1/4. Its pathway is amino-acid biosynthesis; L-valine biosynthesis; L-valine from pyruvate: step 1/4. With respect to regulation, the regulatory subunit ILV6 stimulates enzymatic activity seven- to tenfold and confers sensitivity to inhibition by valine and activation by ATP. In terms of biological role, catalytic subunit of mitochondrial acetolactate synthase, which catalyzes the first of a series of common steps in the biosynthesis of the branched-chain amino acids. Catalyzes the irreversible decarboxylation of pyruvate to a bound hydroxyethyl group that then condenses with either a second pyruvate molecule to form 2-acetolactate (AL) or with 2-ketobutyrate to form 2-aceto-2-hydroxybutyrate (AHB). The first product is the precursor for valine and leucine biosynthesis, while the second leads to isoleucine. The protein is Acetolactate synthase catalytic subunit, mitochondrial (ILV2) of Saccharomyces cerevisiae (strain ATCC 204508 / S288c) (Baker's yeast).